The following is a 61-amino-acid chain: Double gene block protein 1 (61 aa).

The disordered stretch occupies residues 1–45; that stretch reads MDIESEVPVVGKQMLAGNRGKQKTRRSVAKDAIRKPASDSTNGGN. Positions 17–35 are RNA-binding; that stretch reads GNRGKQKTRRSVAKDAIRK. Basic and acidic residues predominate over residues 28–37; the sequence is VAKDAIRKPA.

The protein belongs to the carmovirus double gene block protein 1 family. Homodimer.

Cell-to-cell movement. Displays RNA-binding activity. This is Double gene block protein 1 from Carnation mottle virus (CarMV).